Reading from the N-terminus, the 344-residue chain is tRNA N6-adenosine threonylcarbamoyltransferase (344 aa).

Fe cation-binding residues include His-111 and His-115. Substrate-binding positions include 134–138 (LVSGG), Asp-167, Gly-180, and Asn-272. Residue Asp-300 coordinates Fe cation.

Belongs to the KAE1 / TsaD family. It depends on Fe(2+) as a cofactor.

The protein resides in the cytoplasm. It carries out the reaction L-threonylcarbamoyladenylate + adenosine(37) in tRNA = N(6)-L-threonylcarbamoyladenosine(37) in tRNA + AMP + H(+). Its function is as follows. Required for the formation of a threonylcarbamoyl group on adenosine at position 37 (t(6)A37) in tRNAs that read codons beginning with adenine. Is involved in the transfer of the threonylcarbamoyl moiety of threonylcarbamoyl-AMP (TC-AMP) to the N6 group of A37, together with TsaE and TsaB. TsaD likely plays a direct catalytic role in this reaction. The sequence is that of tRNA N6-adenosine threonylcarbamoyltransferase from Idiomarina loihiensis (strain ATCC BAA-735 / DSM 15497 / L2-TR).